The primary structure comprises 261 residues: 1-(5-phosphoribosyl)-5-[(5-phosphoribosylamino)methylideneamino] imidazole-4-carboxamide isomerase (261 aa).

Catalysis depends on Asp8, which acts as the Proton acceptor. The active-site Proton donor is the Asp139.

Belongs to the HisA/HisF family.

It is found in the cytoplasm. The catalysed reaction is 1-(5-phospho-beta-D-ribosyl)-5-[(5-phospho-beta-D-ribosylamino)methylideneamino]imidazole-4-carboxamide = 5-[(5-phospho-1-deoxy-D-ribulos-1-ylimino)methylamino]-1-(5-phospho-beta-D-ribosyl)imidazole-4-carboxamide. It participates in amino-acid biosynthesis; L-histidine biosynthesis; L-histidine from 5-phospho-alpha-D-ribose 1-diphosphate: step 4/9. In Janthinobacterium sp. (strain Marseille) (Minibacterium massiliensis), this protein is 1-(5-phosphoribosyl)-5-[(5-phosphoribosylamino)methylideneamino] imidazole-4-carboxamide isomerase.